Consider the following 728-residue polypeptide: UvrABC system protein C (728 aa).

Residues 16 to 95 enclose the GIY-YIG domain; that stretch reads DSPGVYRFRD…IKEYDPRFNV (80 aa). The region spanning 208-243 is the UVR domain; the sequence is GTYLRRLERQMAEAAEEMEYERAARLRDDIGALKKA. Disordered stretches follow at residues 473-535 and 689-728; these read ADGE…GRPK and VNTA…GQER. Positions 487–505 are enriched in low complexity; it reads GDAAPNGDAAPNDGAAPDD.

The protein belongs to the UvrC family. As to quaternary structure, interacts with UvrB in an incision complex.

Its subcellular location is the cytoplasm. The UvrABC repair system catalyzes the recognition and processing of DNA lesions. UvrC both incises the 5' and 3' sides of the lesion. The N-terminal half is responsible for the 3' incision and the C-terminal half is responsible for the 5' incision. The sequence is that of UvrABC system protein C from Streptomyces coelicolor (strain ATCC BAA-471 / A3(2) / M145).